A 401-amino-acid chain; its full sequence is Imidazolonepropionase (401 aa).

His66 and His68 together coordinate Fe(3+). Zn(2+) contacts are provided by His66 and His68. 4-imidazolone-5-propanoate-binding residues include Arg75, Tyr138, and His171. Tyr138 contributes to the N-formimidoyl-L-glutamate binding site. His236 provides a ligand contact to Fe(3+). A Zn(2+)-binding site is contributed by His236. Residue Gln239 coordinates 4-imidazolone-5-propanoate. Residue Asp311 participates in Fe(3+) binding. Asp311 is a Zn(2+) binding site. The N-formimidoyl-L-glutamate site is built by Asn313 and Gly315. Residue Thr316 participates in 4-imidazolone-5-propanoate binding.

This sequence belongs to the metallo-dependent hydrolases superfamily. HutI family. Zn(2+) serves as cofactor. Fe(3+) is required as a cofactor.

The protein localises to the cytoplasm. It catalyses the reaction 4-imidazolone-5-propanoate + H2O = N-formimidoyl-L-glutamate. It participates in amino-acid degradation; L-histidine degradation into L-glutamate; N-formimidoyl-L-glutamate from L-histidine: step 3/3. Catalyzes the hydrolytic cleavage of the carbon-nitrogen bond in imidazolone-5-propanoate to yield N-formimidoyl-L-glutamate. It is the third step in the universal histidine degradation pathway. The chain is Imidazolonepropionase from Pseudomonas fluorescens (strain ATCC BAA-477 / NRRL B-23932 / Pf-5).